Here is a 195-residue protein sequence, read N- to C-terminus: Imidazoleglycerol-phosphate dehydratase (195 aa).

The protein belongs to the imidazoleglycerol-phosphate dehydratase family.

The protein localises to the cytoplasm. The catalysed reaction is D-erythro-1-(imidazol-4-yl)glycerol 3-phosphate = 3-(imidazol-4-yl)-2-oxopropyl phosphate + H2O. It participates in amino-acid biosynthesis; L-histidine biosynthesis; L-histidine from 5-phospho-alpha-D-ribose 1-diphosphate: step 6/9. This is Imidazoleglycerol-phosphate dehydratase from Beijerinckia indica subsp. indica (strain ATCC 9039 / DSM 1715 / NCIMB 8712).